The sequence spans 133 residues: Small ribosomal subunit protein uS8c (133 aa).

It belongs to the universal ribosomal protein uS8 family. Part of the 30S ribosomal subunit.

Its subcellular location is the plastid. The protein resides in the chloroplast. Its function is as follows. One of the primary rRNA binding proteins, it binds directly to 16S rRNA central domain where it helps coordinate assembly of the platform of the 30S subunit. This chain is Small ribosomal subunit protein uS8c (rps8), found in Pyropia yezoensis (Susabi-nori).